A 392-amino-acid polypeptide reads, in one-letter code: Chorismate synthase (392 aa).

Residues arginine 40 and arginine 46 each coordinate NADP(+). FMN contacts are provided by residues 135–137, 256–257, glycine 300, 315–319, and arginine 341; these read RAS, QA, and KPISS.

It belongs to the chorismate synthase family. As to quaternary structure, homotetramer. FMNH2 is required as a cofactor.

The catalysed reaction is 5-O-(1-carboxyvinyl)-3-phosphoshikimate = chorismate + phosphate. Its pathway is metabolic intermediate biosynthesis; chorismate biosynthesis; chorismate from D-erythrose 4-phosphate and phosphoenolpyruvate: step 7/7. Its function is as follows. Catalyzes the anti-1,4-elimination of the C-3 phosphate and the C-6 proR hydrogen from 5-enolpyruvylshikimate-3-phosphate (EPSP) to yield chorismate, which is the branch point compound that serves as the starting substrate for the three terminal pathways of aromatic amino acid biosynthesis. This reaction introduces a second double bond into the aromatic ring system. The protein is Chorismate synthase of Salinispora tropica (strain ATCC BAA-916 / DSM 44818 / JCM 13857 / NBRC 105044 / CNB-440).